A 447-amino-acid chain; its full sequence is Putative branched-chain amino acid carrier protein SAUSA300_1300 (447 aa).

Transmembrane regions (helical) follow at residues 6-26, 40-60, 74-94, 114-134, 143-163, 193-213, 229-249, 290-310, 326-346, 350-370, 382-402, and 417-437; these read WVIG…IFPP, ILAF…VGAL, PKFS…LFAI, SSIA…YICL, IGSL…IKGY, GYLT…VNAV, LTAG…LGYI, LLGI…IVAV, FVLV…NAVI, IPVL…ILIA, IPVI…LGWL, and LEWF…GIFV.

Belongs to the branched chain amino acid transporter family.

The protein resides in the cell membrane. In terms of biological role, component of the transport system for branched-chain amino acids (leucine, isoleucine and valine), which is coupled to a proton motive force (Potential). Contributes to NaCl tolerance. This is Putative branched-chain amino acid carrier protein SAUSA300_1300 from Staphylococcus aureus (strain USA300).